Here is a 740-residue protein sequence, read N- to C-terminus: Rho GTPase-activating protein 92B (740 aa).

The region spanning 13-246 (ENLSRSSKSD…IQDTIQGTEK (234 aa)) is the BAR domain. Positions 49–74 (LPALSGGGGSGSGSSEEQDKRTKKNS) are disordered. Residues 251–448 (TSLKEHLTST…LLISQWDYFF (198 aa)) form the Rho-GAP domain. Residues 467–740 (GKSKSNSSNE…PPPTNWKSSD (274 aa)) are disordered. Phosphoserine is present on residues Ser469 and Ser473. Residues 506 to 520 (TTNGNGIIMTTSQTS) show a composition bias toward polar residues. Over residues 566 to 577 (PLPPPPVTPAKP) the composition is skewed to pro residues. The residue at position 593 (Ser593) is a Phosphoserine. Thr595 bears the Phosphothreonine mark. The segment covering 643–655 (TTPTQATIDNGNG) has biased composition (polar residues). Residues 659–672 (FKTEHFLDKLRQEN) show a composition bias toward basic and acidic residues. Residues 673-686 (GETNGTREVSSTTK) are compositionally biased toward polar residues. Residues 694–713 (PPATAADQNQQQAQPQVTTP) show a composition bias toward low complexity. A Phosphoserine modification is found at Ser715. Phosphothreonine is present on Thr721. The segment covering 725 to 734 (PTVPAPPPPT) has biased composition (pro residues). Residues Ser738 and Ser739 each carry the phosphoserine modification.

In terms of biological role, GTPase activator for the Rho-type GTPases by converting them to an inactive GDP-bound state. The chain is Rho GTPase-activating protein 92B (RhoGAP92B) from Drosophila melanogaster (Fruit fly).